The chain runs to 553 residues: CTP synthase (553 aa).

Positions 1 to 266 (MTKNYIFITG…DNYICEYFKL (266 aa)) are amidoligase domain. Residue Ser-14 coordinates CTP. UTP is bound at residue Ser-14. Residues 15–20 (SLGKGI) and Asp-72 contribute to the ATP site. Residues Asp-72 and Glu-140 each coordinate Mg(2+). Residues 147-149 (DIE), 187-192 (KTKPTQ), and Lys-223 each bind CTP. Residues 187–192 (KTKPTQ) and Lys-223 each bind UTP. Position 239–241 (239–241 (KDV)) interacts with ATP. Residues 291–544 (IIGIIGKYIK…IKSAKKNKKN (254 aa)) form the Glutamine amidotransferase type-1 domain. Gly-352 is a binding site for L-glutamine. Cys-379 serves as the catalytic Nucleophile; for glutamine hydrolysis. Residues 380 to 383 (LGMQ), Glu-403, and Arg-472 contribute to the L-glutamine site. Active-site residues include His-517 and Glu-519.

It belongs to the CTP synthase family. In terms of assembly, homotetramer.

The enzyme catalyses UTP + L-glutamine + ATP + H2O = CTP + L-glutamate + ADP + phosphate + 2 H(+). It carries out the reaction L-glutamine + H2O = L-glutamate + NH4(+). It catalyses the reaction UTP + NH4(+) + ATP = CTP + ADP + phosphate + 2 H(+). Its pathway is pyrimidine metabolism; CTP biosynthesis via de novo pathway; CTP from UDP: step 2/2. Its activity is regulated as follows. Allosterically activated by GTP, when glutamine is the substrate; GTP has no effect on the reaction when ammonia is the substrate. The allosteric effector GTP functions by stabilizing the protein conformation that binds the tetrahedral intermediate(s) formed during glutamine hydrolysis. Inhibited by the product CTP, via allosteric rather than competitive inhibition. Catalyzes the ATP-dependent amination of UTP to CTP with either L-glutamine or ammonia as the source of nitrogen. Regulates intracellular CTP levels through interactions with the four ribonucleotide triphosphates. In Buchnera aphidicola subsp. Schizaphis graminum (strain Sg), this protein is CTP synthase.